Reading from the N-terminus, the 77-residue chain is Secapin (77 aa).

The signal sequence occupies residues 1 to 32; the sequence is MKNYSKNATYLITVLLFSFVAMLLIIPSKCEA. Positions 33 to 52 are excised as a propeptide; that stretch reads VSNDMQPLEARTADLVQQPR. A disulfide bridge links Cys61 with Cys72.

It belongs to the secapin family. As to expression, expressed by the venom gland.

Its subcellular location is the secreted. Nontoxic peptide. The sequence is that of Secapin from Apis cerana cerana (Oriental honeybee).